The following is a 339-amino-acid chain: Phenylalanine--tRNA ligase alpha subunit (339 aa).

Glutamate 250 contacts Mg(2+).

The protein belongs to the class-II aminoacyl-tRNA synthetase family. Phe-tRNA synthetase alpha subunit type 1 subfamily. Tetramer of two alpha and two beta subunits. It depends on Mg(2+) as a cofactor.

The protein localises to the cytoplasm. It carries out the reaction tRNA(Phe) + L-phenylalanine + ATP = L-phenylalanyl-tRNA(Phe) + AMP + diphosphate + H(+). The sequence is that of Phenylalanine--tRNA ligase alpha subunit from Azobacteroides pseudotrichonymphae genomovar. CFP2.